The following is a 146-amino-acid chain: MIF-like protein mif-3 (146 aa).

The protein belongs to the MIF family.

This is MIF-like protein mif-3 (mif-3) from Caenorhabditis elegans.